Here is a 203-residue protein sequence, read N- to C-terminus: uncharacterized protein (203 aa).

Positions Met-1–Lys-23 are disordered.

This is an uncharacterized protein from Saccharomyces cerevisiae (strain ATCC 204508 / S288c) (Baker's yeast).